A 162-amino-acid polypeptide reads, in one-letter code: Ribosome maturation factor RimP (162 aa).

Belongs to the RimP family.

The protein localises to the cytoplasm. Required for maturation of 30S ribosomal subunits. In Syntrophotalea carbinolica (strain DSM 2380 / NBRC 103641 / GraBd1) (Pelobacter carbinolicus), this protein is Ribosome maturation factor RimP.